The sequence spans 389 residues: Succinate--CoA ligase [ADP-forming] subunit beta (389 aa).

The region spanning 9–236 is the ATP-grasp domain; the sequence is KELFAKHEVP…KDATDPLELK (228 aa). ATP contacts are provided by residues lysine 45, 52–54, serine 94, and glutamate 99; that span reads GRG. 2 residues coordinate Mg(2+): asparagine 191 and aspartate 205. Residues asparagine 256 and 318 to 320 each bind substrate; that span reads GIT.

It belongs to the succinate/malate CoA ligase beta subunit family. Heterotetramer of two alpha and two beta subunits. It depends on Mg(2+) as a cofactor.

It carries out the reaction succinate + ATP + CoA = succinyl-CoA + ADP + phosphate. It catalyses the reaction GTP + succinate + CoA = succinyl-CoA + GDP + phosphate. It participates in carbohydrate metabolism; tricarboxylic acid cycle; succinate from succinyl-CoA (ligase route): step 1/1. Its function is as follows. Succinyl-CoA synthetase functions in the citric acid cycle (TCA), coupling the hydrolysis of succinyl-CoA to the synthesis of either ATP or GTP and thus represents the only step of substrate-level phosphorylation in the TCA. The beta subunit provides nucleotide specificity of the enzyme and binds the substrate succinate, while the binding sites for coenzyme A and phosphate are found in the alpha subunit. The sequence is that of Succinate--CoA ligase [ADP-forming] subunit beta from Rhodococcus jostii (strain RHA1).